The chain runs to 121 residues: Large ribosomal subunit protein eL18 (121 aa).

The protein belongs to the eukaryotic ribosomal protein eL18 family.

The chain is Large ribosomal subunit protein eL18 from Methanospirillum hungatei JF-1 (strain ATCC 27890 / DSM 864 / NBRC 100397 / JF-1).